The following is a 461-amino-acid chain: NADP-specific glutamate dehydrogenase (461 aa).

Residue Lys-115 is part of the active site.

Belongs to the Glu/Leu/Phe/Val dehydrogenases family. As to quaternary structure, homohexamer.

It catalyses the reaction L-glutamate + NADP(+) + H2O = 2-oxoglutarate + NH4(+) + NADPH + H(+). This Penicillium chrysogenum (Penicillium notatum) protein is NADP-specific glutamate dehydrogenase (GDH).